A 299-amino-acid polypeptide reads, in one-letter code: Pyridoxal 5'-phosphate synthase subunit PdxS (299 aa).

Asp-24 contributes to the D-ribose 5-phosphate binding site. Lys-81 (schiff-base intermediate with D-ribose 5-phosphate) is an active-site residue. Gly-153 contributes to the D-ribose 5-phosphate binding site. Arg-165 is a binding site for D-glyceraldehyde 3-phosphate. Residues Gly-219 and 240–241 (GS) each bind D-ribose 5-phosphate.

The protein belongs to the PdxS/SNZ family. In the presence of PdxT, forms a dodecamer of heterodimers.

It carries out the reaction aldehydo-D-ribose 5-phosphate + D-glyceraldehyde 3-phosphate + L-glutamine = pyridoxal 5'-phosphate + L-glutamate + phosphate + 3 H2O + H(+). The protein operates within cofactor biosynthesis; pyridoxal 5'-phosphate biosynthesis. Catalyzes the formation of pyridoxal 5'-phosphate from ribose 5-phosphate (RBP), glyceraldehyde 3-phosphate (G3P) and ammonia. The ammonia is provided by the PdxT subunit. Can also use ribulose 5-phosphate and dihydroxyacetone phosphate as substrates, resulting from enzyme-catalyzed isomerization of RBP and G3P, respectively. In Methanococcus aeolicus (strain ATCC BAA-1280 / DSM 17508 / OCM 812 / Nankai-3), this protein is Pyridoxal 5'-phosphate synthase subunit PdxS.